A 427-amino-acid chain; its full sequence is UPF0229 protein KPN78578_11640 (427 aa).

A disordered region spans residues 72–109 (RNRVHPGNDHFVQNDRIERPQGGGGGGGSGQGQASADG). The segment covering 77 to 90 (PGNDHFVQNDRIER) has biased composition (basic and acidic residues). A compositionally biased stretch (gly residues) spans 92-102 (QGGGGGGGSGQ).

Belongs to the UPF0229 family.

The polypeptide is UPF0229 protein KPN78578_11640 (Klebsiella pneumoniae subsp. pneumoniae (strain ATCC 700721 / MGH 78578)).